We begin with the raw amino-acid sequence, 364 residues long: Methylthioribose-1-phosphate isomerase (364 aa).

The active-site Proton donor is the D246.

Belongs to the eIF-2B alpha/beta/delta subunits family. MtnA subfamily.

The protein localises to the cytoplasm. It is found in the nucleus. It catalyses the reaction 5-(methylsulfanyl)-alpha-D-ribose 1-phosphate = 5-(methylsulfanyl)-D-ribulose 1-phosphate. Its pathway is amino-acid biosynthesis; L-methionine biosynthesis via salvage pathway; L-methionine from S-methyl-5-thio-alpha-D-ribose 1-phosphate: step 1/6. Its function is as follows. Catalyzes the interconversion of methylthioribose-1-phosphate (MTR-1-P) into methylthioribulose-1-phosphate (MTRu-1-P). This chain is Methylthioribose-1-phosphate isomerase, found in Bombyx mori (Silk moth).